Here is a 238-residue protein sequence, read N- to C-terminus: Ureidoacrylate amidohydrolase RutB (238 aa).

D35 functions as the Proton acceptor in the catalytic mechanism. K144 is a catalytic residue. Residue C177 is the Nucleophile of the active site.

Belongs to the isochorismatase family. RutB subfamily.

The catalysed reaction is (Z)-3-ureidoacrylate + H2O + H(+) = (Z)-3-aminoacrylate + NH4(+) + CO2. It catalyses the reaction (Z)-3-ureidoacrylate + H2O = (Z)-3-aminoacrylate + carbamate + H(+). The enzyme catalyses (Z)-2-methylureidoacrylate + H2O + H(+) = (Z)-2-methylaminoacrylate + NH4(+) + CO2. Functionally, hydrolyzes ureidoacrylate to form aminoacrylate and carbamate. The carbamate hydrolyzes spontaneously, thereby releasing one of the nitrogen atoms of the pyrimidine ring as ammonia and one of its carbon atoms as CO2. The polypeptide is Ureidoacrylate amidohydrolase RutB (Caulobacter vibrioides (strain NA1000 / CB15N) (Caulobacter crescentus)).